The primary structure comprises 400 residues: MIIKPRVRGFICVTTHPVGCEANVKEQIDYVTSHGPIANGPKKVLVIGASTGYGLAARISAAFGSGADTLGVFFERAGSDTKPGTAGWYNSAAFEKFAAEKGLYARSINGDAFSDKVKQITIDTIKQDLGKVDLVVYSLAAPRRTHPKTGETISSTLKPVGKSVTFRGLDTDKETIREVTLEPATQEEIDGTVAVMGGEDWQMWIDALADAGVLADGAKTTAFTYLGEQITHDIYWNGSIGEAKKDLDKKVVSIREKLAVHGGDARVSVLKAVVTQASSAIPMMPLYLSLLFKVMKEKGTHEGCIEQVYGLLKDSMYGATPHIDEEGRLRADYKELDPQVQAQVVAMWDKVTNDNLYEMTDFAGYKTEFLRLFGFEIAGVDYDADVNPDVKIPGIIDTTA.

NAD(+)-binding positions include 48-53 (GASTGY), 74-75 (FE), 111-112 (DA), and 139-140 (LA). Tyrosine 225 contacts substrate. Tyrosine 235 serves as the catalytic Proton donor. NAD(+) is bound by residues lysine 244 and 273 to 275 (VVT).

Belongs to the TER reductase family. In terms of assembly, monomer.

The enzyme catalyses a 2,3-saturated acyl-[ACP] + NAD(+) = a (2E)-enoyl-[ACP] + NADH + H(+). The protein operates within lipid metabolism; fatty acid biosynthesis. Involved in the final reduction of the elongation cycle of fatty acid synthesis (FAS II). Catalyzes the reduction of a carbon-carbon double bond in an enoyl moiety that is covalently linked to an acyl carrier protein (ACP). The sequence is that of Enoyl-[acyl-carrier-protein] reductase [NADH] from Burkholderia vietnamiensis (strain G4 / LMG 22486) (Burkholderia cepacia (strain R1808)).